The sequence spans 178 residues: Bifunctional protein PyrR (178 aa).

Residues Thr42–Arg43, Arg83, Asp103–Thr111, Arg136, and Val160 each bind substrate. The PRPP-binding signature appears at Val99 to Thr111.

This sequence belongs to the purine/pyrimidine phosphoribosyltransferase family. PyrR subfamily.

The enzyme catalyses UMP + diphosphate = 5-phospho-alpha-D-ribose 1-diphosphate + uracil. Its function is as follows. Regulates the transcription of the pyrimidine nucleotide (pyr) operon in response to exogenous pyrimidines. In terms of biological role, also displays a weak uracil phosphoribosyltransferase activity which is not physiologically significant. This Synechocystis sp. (strain ATCC 27184 / PCC 6803 / Kazusa) protein is Bifunctional protein PyrR.